The primary structure comprises 877 residues: GPI inositol-deacylase (877 aa).

A helical transmembrane segment spans residues 35 to 55 (FLSRLFCALAVLFSYSIYQSF). Ser-206 is an active-site residue. Residues Asn-291, Asn-336, Asn-374, Asn-448, and Asn-473 are each glycosylated (N-linked (GlcNAc...) asparagine). 8 helical membrane passes run 597–617 (VLAW…SDFI), 637–657 (MPIC…LPDF), 674–694 (PLVG…SFVI), 735–755 (VLVN…ILLW), 771–791 (ISTC…HVAI), 809–829 (NFYY…GGTI), 834–854 (VCLK…FSVG), and 857–877 (WTWI…ASII).

Belongs to the GPI inositol-deacylase family.

It is found in the endoplasmic reticulum membrane. Its function is as follows. Involved in inositol deacylation of GPI-anchored proteins which plays important roles in the quality control and ER-associated degradation of GPI-anchored proteins. This chain is GPI inositol-deacylase (BST1), found in Cryptococcus neoformans var. neoformans serotype D (strain JEC21 / ATCC MYA-565) (Filobasidiella neoformans).